The sequence spans 237 residues: 1-(5-phosphoribosyl)-5-[(5-phosphoribosylamino)methylideneamino] imidazole-4-carboxamide isomerase (237 aa).

D8 acts as the Proton acceptor in catalysis. D130 functions as the Proton donor in the catalytic mechanism.

It belongs to the HisA/HisF family.

It is found in the cytoplasm. The catalysed reaction is 1-(5-phospho-beta-D-ribosyl)-5-[(5-phospho-beta-D-ribosylamino)methylideneamino]imidazole-4-carboxamide = 5-[(5-phospho-1-deoxy-D-ribulos-1-ylimino)methylamino]-1-(5-phospho-beta-D-ribosyl)imidazole-4-carboxamide. It functions in the pathway amino-acid biosynthesis; L-histidine biosynthesis; L-histidine from 5-phospho-alpha-D-ribose 1-diphosphate: step 4/9. This chain is 1-(5-phosphoribosyl)-5-[(5-phosphoribosylamino)methylideneamino] imidazole-4-carboxamide isomerase, found in Halothermothrix orenii (strain H 168 / OCM 544 / DSM 9562).